The sequence spans 95 residues: Aspartyl/glutamyl-tRNA(Asn/Gln) amidotransferase subunit C (95 aa).

The protein belongs to the GatC family. As to quaternary structure, heterotrimer of A, B and C subunits.

The catalysed reaction is L-glutamyl-tRNA(Gln) + L-glutamine + ATP + H2O = L-glutaminyl-tRNA(Gln) + L-glutamate + ADP + phosphate + H(+). It carries out the reaction L-aspartyl-tRNA(Asn) + L-glutamine + ATP + H2O = L-asparaginyl-tRNA(Asn) + L-glutamate + ADP + phosphate + 2 H(+). Functionally, allows the formation of correctly charged Asn-tRNA(Asn) or Gln-tRNA(Gln) through the transamidation of misacylated Asp-tRNA(Asn) or Glu-tRNA(Gln) in organisms which lack either or both of asparaginyl-tRNA or glutaminyl-tRNA synthetases. The reaction takes place in the presence of glutamine and ATP through an activated phospho-Asp-tRNA(Asn) or phospho-Glu-tRNA(Gln). This is Aspartyl/glutamyl-tRNA(Asn/Gln) amidotransferase subunit C from Campylobacter curvus (strain 525.92).